Here is a 436-residue protein sequence, read N- to C-terminus: 3-ketoacyl-CoA thiolase (436 aa).

Catalysis depends on Cys99, which acts as the Acyl-thioester intermediate. Catalysis depends on proton acceptor residues His392 and Cys422.

It belongs to the thiolase-like superfamily. Thiolase family. Heterotetramer of two alpha chains (FadJ) and two beta chains (FadI).

The protein localises to the cytoplasm. The enzyme catalyses an acyl-CoA + acetyl-CoA = a 3-oxoacyl-CoA + CoA. Its pathway is lipid metabolism; fatty acid beta-oxidation. Functionally, catalyzes the final step of fatty acid oxidation in which acetyl-CoA is released and the CoA ester of a fatty acid two carbons shorter is formed. The chain is 3-ketoacyl-CoA thiolase from Shewanella oneidensis (strain ATCC 700550 / JCM 31522 / CIP 106686 / LMG 19005 / NCIMB 14063 / MR-1).